A 176-amino-acid chain; its full sequence is Mitochondrial inner membrane protein Mpv17 (176 aa).

A run of 4 helical transmembrane segments spans residues 18 to 38, 57 to 77, 94 to 114, and 131 to 151; these read VQVLTAGSLMGLGDIISQQLV, LGCGFVGPVVGGWYRVLDHLI, GGFAPCFLGCFLPLVGVLNGM, and LITNYYLWPAVQLANFYLVPL.

This sequence belongs to the peroxisomal membrane protein PXMP2/4 family.

The protein localises to the mitochondrion inner membrane. Its function is as follows. Non-selective channel that modulates the membrane potential under normal conditions and oxidative stress, and is involved in mitochondrial homeostasis. Involved in mitochondrial deoxynucleoside triphosphates (dNTP) pool homeostasis and mitochondrial DNA (mtDNA) maintenance. May be involved in the regulation of reactive oxygen species metabolism and the control of oxidative phosphorylation. This Rattus norvegicus (Rat) protein is Mitochondrial inner membrane protein Mpv17.